We begin with the raw amino-acid sequence, 641 residues long: 1-deoxy-D-xylulose-5-phosphate synthase (641 aa).

Residues His71 and 112 to 114 (SHA) contribute to the thiamine diphosphate site. Residue Asp144 coordinates Mg(2+). Thiamine diphosphate contacts are provided by residues 145–146 (GA), Asn173, Tyr284, and Glu365. Asn173 contributes to the Mg(2+) binding site.

It belongs to the transketolase family. DXPS subfamily. Homodimer. It depends on Mg(2+) as a cofactor. Thiamine diphosphate is required as a cofactor.

The enzyme catalyses D-glyceraldehyde 3-phosphate + pyruvate + H(+) = 1-deoxy-D-xylulose 5-phosphate + CO2. It functions in the pathway metabolic intermediate biosynthesis; 1-deoxy-D-xylulose 5-phosphate biosynthesis; 1-deoxy-D-xylulose 5-phosphate from D-glyceraldehyde 3-phosphate and pyruvate: step 1/1. Catalyzes the acyloin condensation reaction between C atoms 2 and 3 of pyruvate and glyceraldehyde 3-phosphate to yield 1-deoxy-D-xylulose-5-phosphate (DXP). The protein is 1-deoxy-D-xylulose-5-phosphate synthase of Mycobacterium avium (strain 104).